The sequence spans 255 residues: MSSSPPQHDLGHCDGDDFLARYTLHSRAEILFQLRALQKRKVLVNLDLSESRQIIVTSVLAVNEADNTVVLDSARGDALNNELMSGKGAEFVAQLDGVSISFSIGAVSLCEYEKLPALRIPVPTSLIRLQRREHFRVPLPIANPVKCIVPSPWEESKEQITTHLVDIGCGGVALTDIGARLGTESGRLLRGCRLLLPETDVVVTTLEIRNSAQIRLQNGSFQTRLGCKFVDLPNDMAAHLQRFVMNIERARRNRL.

One can recognise a PilZ domain in the interval 130–245; that stretch reads QRREHFRVPL…MAAHLQRFVM (116 aa).

Belongs to the YcgR family. Monomer. Interacts with the flagellar basal bodies.

The protein localises to the bacterial flagellum basal body. In terms of biological role, acts as a flagellar brake, regulating swimming and swarming in a bis-(3'-5') cyclic diguanylic acid (c-di-GMP)-dependent manner. Binds 1 c-di-GMP dimer per subunit. Increasing levels of c-di-GMP lead to decreased motility. In Thiobacillus denitrificans (strain ATCC 25259 / T1), this protein is Flagellar brake protein YcgR.